The primary structure comprises 413 residues: Enolase (413 aa).

(2R)-2-phosphoglycerate is bound at residue Gln-170. Catalysis depends on Glu-212, which acts as the Proton donor. The Mg(2+) site is built by Asp-245, Glu-286, and Asp-313. 4 residues coordinate (2R)-2-phosphoglycerate: Lys-338, Arg-367, Ser-368, and Lys-389. Residue Lys-338 is the Proton acceptor of the active site.

This sequence belongs to the enolase family. It depends on Mg(2+) as a cofactor.

The protein resides in the cytoplasm. The protein localises to the secreted. It localises to the cell surface. The catalysed reaction is (2R)-2-phosphoglycerate = phosphoenolpyruvate + H2O. It participates in carbohydrate degradation; glycolysis; pyruvate from D-glyceraldehyde 3-phosphate: step 4/5. Its function is as follows. Catalyzes the reversible conversion of 2-phosphoglycerate (2-PG) into phosphoenolpyruvate (PEP). It is essential for the degradation of carbohydrates via glycolysis. This chain is Enolase, found in Neorickettsia sennetsu (strain ATCC VR-367 / Miyayama) (Ehrlichia sennetsu).